Here is a 184-residue protein sequence, read N- to C-terminus: Large ribosomal subunit protein uL6 (184 aa).

This sequence belongs to the universal ribosomal protein uL6 family. As to quaternary structure, part of the 50S ribosomal subunit.

This protein binds to the 23S rRNA, and is important in its secondary structure. It is located near the subunit interface in the base of the L7/L12 stalk, and near the tRNA binding site of the peptidyltransferase center. This Thermomicrobium roseum (strain ATCC 27502 / DSM 5159 / P-2) protein is Large ribosomal subunit protein uL6.